The chain runs to 206 residues: Probable glutathione peroxidase 3, mitochondrial (206 aa).

The transit peptide at 1-12 directs the protein to the mitochondrion; it reads MPRSSRWVNQRA. Cys-80 is an active-site residue.

Belongs to the glutathione peroxidase family. Interacts with ABI1 and ABI2. As to expression, ubiquitous.

It is found in the mitochondrion. It carries out the reaction 2 glutathione + H2O2 = glutathione disulfide + 2 H2O. Its activity is regulated as follows. The redox states are modulated by H(2)O(2). Its function is as follows. May constitute a glutathione peroxidase-like protective system against oxidative stresses. Involved positively in abscisic acid (ABA) signaling pathway that regulates numerous ABA responses, such as stomatal closure, seed germination and inhibition of vegetative growth. Oxidizes and represses target proteins (e.g. the phosphatase activity of ABI1 and ABI2) when oxidized by H(2)O(2), probably after ABA signaling. Modulates the calcium channel activity in guard cells in response to ABA or H(2)O(2). Confers tolerance to drought stress, by enhancing the ABA-dependent stomatal closure. The chain is Probable glutathione peroxidase 3, mitochondrial (GPX3) from Arabidopsis thaliana (Mouse-ear cress).